We begin with the raw amino-acid sequence, 403 residues long: Na(+)-translocating NADH-quinone reductase subunit B (403 aa).

A run of 9 helical transmembrane segments spans residues Met56 to Gly76, Ala121 to Phe141, Ile163 to Ile183, Trp220 to Ile240, Thr265 to Trp285, Ile287 to Ser307, Met312 to Phe332, Trp348 to Phe368, and Gly371 to Val391. At Thr230 the chain carries FMN phosphoryl threonine.

It belongs to the NqrB/RnfD family. Composed of six subunits; NqrA, NqrB, NqrC, NqrD, NqrE and NqrF. The cofactor is FMN.

Its subcellular location is the cell inner membrane. The catalysed reaction is a ubiquinone + n Na(+)(in) + NADH + H(+) = a ubiquinol + n Na(+)(out) + NAD(+). Functionally, NQR complex catalyzes the reduction of ubiquinone-1 to ubiquinol by two successive reactions, coupled with the transport of Na(+) ions from the cytoplasm to the periplasm. NqrA to NqrE are probably involved in the second step, the conversion of ubisemiquinone to ubiquinol. In Ectopseudomonas mendocina (strain ymp) (Pseudomonas mendocina), this protein is Na(+)-translocating NADH-quinone reductase subunit B.